Here is a 504-residue protein sequence, read N- to C-terminus: Maturase K (504 aa).

It belongs to the intron maturase 2 family. MatK subfamily.

It localises to the plastid. The protein resides in the chloroplast. Its function is as follows. Usually encoded in the trnK tRNA gene intron. Probably assists in splicing its own and other chloroplast group II introns. The polypeptide is Maturase K (Fagus hayatae (Formosan elm)).